A 303-amino-acid polypeptide reads, in one-letter code: tRNA dimethylallyltransferase 1 (303 aa).

Residue 17 to 24 (GPTACGKT) participates in ATP binding. 19 to 24 (TACGKT) lines the substrate pocket. The interval 42 to 45 (DSRQ) is interaction with substrate tRNA.

The protein belongs to the IPP transferase family. As to quaternary structure, monomer. Mg(2+) serves as cofactor.

The catalysed reaction is adenosine(37) in tRNA + dimethylallyl diphosphate = N(6)-dimethylallyladenosine(37) in tRNA + diphosphate. Catalyzes the transfer of a dimethylallyl group onto the adenine at position 37 in tRNAs that read codons beginning with uridine, leading to the formation of N6-(dimethylallyl)adenosine (i(6)A). The protein is tRNA dimethylallyltransferase 1 of Hahella chejuensis (strain KCTC 2396).